We begin with the raw amino-acid sequence, 158 residues long: 14-3-3 protein gamma (158 aa).

Positions 1–158 are interaction with SPATA18/MIEAP; sequence AAAMKNVTEL…TSDQQDDDGG (158 aa). Serine 48 bears the Phosphoserine mark. Tyrosine 60 carries the phosphotyrosine modification. A Phosphothreonine modification is found at threonine 72. Residue serine 130 is modified to Phosphoserine. At threonine 149 the chain carries Phosphothreonine. Phosphoserine is present on serine 150.

Belongs to the 14-3-3 family. Homodimer. Part of a complex that contains DSG3, PKP1, YAP1 and YWHAG; the complex is required for localization of DSG3 and YAP1 to the cell membrane in keratinocytes. Interacts with SAMSN1. Interacts with RAF1, SSH1 and CRTC2/TORC2. Interacts with ABL1 (phosphorylated form); the interaction retains it in the cytoplasm. Interacts with GAB2. Interacts with MDM4 (phosphorylated); negatively regulates MDM4 activity toward TP53. Interacts with PKA-phosphorylated AANAT and SIRT2. Interacts with the 'Thr-369' phosphorylated form of DAPK2. Interacts with PI4KB, TBC1D22A and TBC1D22B. Interacts with SLITRK1. Interacts with LRRK2; this interaction is dependent on LRRK2 phosphorylation. Interacts with MARK2 and MARK3. Interacts with MEFV. Interacts with ENDOG, TSC2 and PIK3C3; interaction with ENDOG weakens its interaction with TSC2 and PIK3C3. Interacts with (phosphorylated) WDR24. Interacts with BEST1; this interaction promotes L-glutamate channel activity leading to the positive regulation of NMDA glutamate receptor activity through the L-glutamate secretion. Interacts with PKP1 (when phosphorylated); the interaction results in translocation of PKP1 to the cytoplasm and loss of intercellular adhesion in keratinocytes. Interacts with SPATA18/MIEAP; a protein that also plays a role in MALM. Phosphorylated by various PKC isozymes.

Its subcellular location is the cytoplasm. The protein localises to the cytosol. The protein resides in the mitochondrion matrix. Functionally, adapter protein implicated in the regulation of a large spectrum of both general and specialized signaling pathways. Binds to a large number of partners, usually by recognition of a phosphoserine or phosphothreonine motif. Binding generally results in the modulation of the activity of the binding partner. Promotes inactivation of WDR24 component of the GATOR2 complex by binding to phosphorylated WDR24. Participates in the positive regulation of NMDA glutamate receptor activity by promoting the L-glutamate secretion through interaction with BEST1. Reduces keratinocyte intercellular adhesion, via interacting with PKP1 and sequestering it in the cytoplasm, thereby reducing its incorporation into desmosomes. Plays a role in mitochondrial protein catabolic process (also named MALM) that promotes the degradation of damaged proteins inside mitochondria. This chain is 14-3-3 protein gamma, found in Ovis aries (Sheep).